Consider the following 193-residue polypeptide: Holliday junction branch migration complex subunit RuvA (193 aa).

Positions 1–64 are domain I; sequence MIGRIAGILL…EDAHLLYGFL (64 aa). Positions 65-139 are domain II; the sequence is TPQERTTFRE…GKLGADLGAL (75 aa). Positions 139-143 are flexible linker; that stretch reads LAGAA. Residues 144–193 form a domain III region; sequence SQSDHATDILNALVALGYSEKEGLAAIKNVPAGTGVSEGIKLALKALSKV.

This sequence belongs to the RuvA family. In terms of assembly, homotetramer. Forms an RuvA(8)-RuvB(12)-Holliday junction (HJ) complex. HJ DNA is sandwiched between 2 RuvA tetramers; dsDNA enters through RuvA and exits via RuvB. An RuvB hexamer assembles on each DNA strand where it exits the tetramer. Each RuvB hexamer is contacted by two RuvA subunits (via domain III) on 2 adjacent RuvB subunits; this complex drives branch migration. In the full resolvosome a probable DNA-RuvA(4)-RuvB(12)-RuvC(2) complex forms which resolves the HJ.

It localises to the cytoplasm. In terms of biological role, the RuvA-RuvB-RuvC complex processes Holliday junction (HJ) DNA during genetic recombination and DNA repair, while the RuvA-RuvB complex plays an important role in the rescue of blocked DNA replication forks via replication fork reversal (RFR). RuvA specifically binds to HJ cruciform DNA, conferring on it an open structure. The RuvB hexamer acts as an ATP-dependent pump, pulling dsDNA into and through the RuvAB complex. HJ branch migration allows RuvC to scan DNA until it finds its consensus sequence, where it cleaves and resolves the cruciform DNA. The protein is Holliday junction branch migration complex subunit RuvA of Burkholderia ambifaria (strain MC40-6).